Consider the following 193-residue polypeptide: Small COPII coat GTPase SAR1 (193 aa).

The STAR; SAR1-N-terminal activation recruitment. Required for the activation and subsequent recruitment to ER membrane signature appears at 3–5; the sequence is FLW. The tract at residues 11-15 is mediates recruitment to ER membranes; sequence VLNML. Asp-30 lines the Mg(2+) pocket. Residues Asn-31, Ala-32, Gly-33, Lys-34, Thr-35, and Thr-36 each coordinate GDP. Asn-31 contributes to the GTP binding site. GTP is bound by residues Gly-33, Lys-34, Thr-35, and Thr-36. Asp-71 contributes to the Mg(2+) binding site. Positions 130, 131, 133, 176, and 177 each coordinate GDP. 5 residues coordinate GTP: Asn-130, Lys-131, Asp-133, Val-176, and Leu-177.

Belongs to the small GTPase superfamily. SAR1 family. Homodimer; upon association with membrane. Part of the coat protein complex II/COPII, composed of SEC23/24 and SEC13/31 heterodimers, that it helps recruit and assemble on endoplasmic reticulum (ER) membranes at ER exit sites.

It localises to the endoplasmic reticulum membrane. The protein localises to the golgi apparatus. It is found in the golgi stack membrane. Its subcellular location is the cytoplasm. The protein resides in the cytosol. It carries out the reaction GTP + H2O = GDP + phosphate + H(+). With respect to regulation, small GTPases activation is mediated by guanine exchange factors (GEF), while inactivation through hydrolysis of the bound GTP is stimulated by GTPase activating proteins (GAP). Small GTPase that cycles between an active GTP-bound and an inactive GDP-bound state and mainly functions in vesicle-mediated endoplasmic reticulum (ER) to Golgi transport. The active GTP-bound form inserts into the endoplasmic reticulum membrane where it recruits the remainder of the coat protein complex II/COPII. The coat protein complex II assembling and polymerizing on endoplasmic reticulum membrane is responsible for both the sorting of cargos and the deformation and budding of membranes into vesicles destined to the Golgi. Plays a role in transporting the tyrosine kinase receptor let-23 from the endoplasmic reticulum to the plasma membrane of vulval precursor cells. This is Small COPII coat GTPase SAR1 from Caenorhabditis elegans.